Reading from the N-terminus, the 253-residue chain is MKTLQMTLSNKKNNFIPYIMAGDHEKGLEGLKETIQLLEQAGSSAIEIGVPFSDPVADGPVIEQAGLRALARNVSLSSILETLKTIDTKVPLVIMTYFNPVYQFGIEKFVAALEKTPVKGLIIPDLPKEHEDYIKPFINDKDICLVPLVSLTTPLSRQKELVADAEGFIYAVAINGVTGKENAYSNQLDQHLKALSSLTDVPVLTGFGISTLSDVDRFNKVSSGVIVGSKIVRDLHEGKENEVIKFIENAINF.

Catalysis depends on proton acceptor residues Glu47 and Asp58.

Belongs to the TrpA family. As to quaternary structure, tetramer of two alpha and two beta chains.

It carries out the reaction (1S,2R)-1-C-(indol-3-yl)glycerol 3-phosphate + L-serine = D-glyceraldehyde 3-phosphate + L-tryptophan + H2O. It participates in amino-acid biosynthesis; L-tryptophan biosynthesis; L-tryptophan from chorismate: step 5/5. Its function is as follows. The alpha subunit is responsible for the aldol cleavage of indoleglycerol phosphate to indole and glyceraldehyde 3-phosphate. This Lactococcus lactis subsp. lactis (strain IL1403) (Streptococcus lactis) protein is Tryptophan synthase alpha chain.